The sequence spans 230 residues: GTP cyclohydrolase III (230 aa).

It belongs to the archaeal-type GTP cyclohydrolase family.

The catalysed reaction is GTP + 3 H2O = 2-amino-5-formylamino-6-(5-phospho-D-ribosylamino)pyrimidin-4(3H)-one + 2 phosphate + 2 H(+). Its function is as follows. Catalyzes the formation of 2-amino-5-formylamino-6-ribofuranosylamino-4(3H)-pyrimidinone ribonucleotide monophosphate and inorganic phosphate from GTP. Also has an independent pyrophosphate phosphohydrolase activity. The sequence is that of GTP cyclohydrolase III from Saccharolobus islandicus (strain M.16.27) (Sulfolobus islandicus).